A 689-amino-acid chain; its full sequence is E3 ubiquitin-protein ligase RNF43 (689 aa).

Positions methionine 1 to glycine 27 are cleaved as a signal peptide. Residues threonine 28–histidine 191 lie on the Extracellular side of the membrane. N-linked (GlcNAc...) asparagine glycans are attached at residues asparagine 56 and asparagine 86. Cysteine 85 and cysteine 113 are joined by a disulfide. A helical transmembrane segment spans residues aspartate 192–alanine 212. Residues arginine 213–valine 689 are Cytoplasmic-facing. The RING-type; atypical zinc finger occupies cysteine 268–cysteine 308. Disordered stretches follow at residues glutamine 386–serine 430, threonine 445–serine 467, and valine 492–serine 639. Composition is skewed to low complexity over residues aspartate 408–serine 430 and serine 446–serine 461. 2 stretches are compositionally biased toward basic residues: residues valine 492–arginine 504 and serine 512–valine 523. A compositionally biased stretch (polar residues) spans glutamine 574 to serine 588.

It belongs to the ZNRF3 family.

It localises to the cell membrane. The protein resides in the endoplasmic reticulum membrane. The protein localises to the nucleus envelope. The enzyme catalyses S-ubiquitinyl-[E2 ubiquitin-conjugating enzyme]-L-cysteine + [acceptor protein]-L-lysine = [E2 ubiquitin-conjugating enzyme]-L-cysteine + N(6)-ubiquitinyl-[acceptor protein]-L-lysine.. It participates in protein modification; protein ubiquitination. In terms of biological role, E3 ubiquitin-protein ligase that acts as a negative regulator of the Wnt signaling pathway by mediating the ubiquitination, endocytosis and subsequent degradation of Wnt receptor complex components Frizzled. Acts on both canonical and non-canonical Wnt signaling pathway. Along with RSPO2 and ZNRF3, constitutes a master switch that governs limb specification. The sequence is that of E3 ubiquitin-protein ligase RNF43 (rnf43) from Xenopus tropicalis (Western clawed frog).